The chain runs to 772 residues: Tubulin monoglycylase TTLL3 (772 aa).

The tract at residues 50-81 (PTLLPPQKDLDSSAMGDSDTTEDEDEDEDEEF) is disordered. The segment covering 68-81 (DTTEDEDEDEDEEF) has biased composition (acidic residues). The TTL domain maps to 151–510 (ARNVLKLVVK…RMLDRNCDTG (360 aa)). ATP is bound by residues K283, 289–290 (RG), 321–324 (QKYI), 334–336 (KFD), and 378–379 (CN). Residue R289 coordinates a protein. S381 serves as a coordination point for L-glutamate. Residues D456, E469, and N471 each coordinate Mg(2+). An ATP-binding site is contributed by E469.

It depends on Mg(2+) as a cofactor. In terms of tissue distribution, expressed in brain, heart, kidney, testis, liver, lung, muscle, spleen, trachea and colon.

The protein resides in the cytoplasm. It localises to the cytoskeleton. Its subcellular location is the cell projection. It is found in the cilium. The protein localises to the cilium axoneme. The protein resides in the flagellum axoneme. It carries out the reaction L-glutamyl-[protein] + glycine + ATP = glycyl-L-glutamyl-[protein] + ADP + phosphate + H(+). In terms of biological role, monoglycylase which modifies alpha- and beta-tubulin, adding a single glycine on the gamma-carboxyl groups of specific glutamate residues to generate monoglycine side chains within the C-terminal tail of tubulin. Not involved in elongation step of the polyglycylation reaction. Preferentially glycylates a beta-tail peptide over the alpha-tail, although shifts its preference toward alpha-tail as beta-tail glutamylation increases. Competes with polyglutamylases for modification site on beta-tubulin substrate, thereby creating an anticorrelation between glycylation and glutamylation reactions. Together with TTLL8, mediates microtubule glycylation of primary and motile cilia, which is essential for their stability and maintenance. Involved in microtubule glycylation of primary cilia in colon which controls cell proliferation of epithelial cells and plays an essential role in colon cancer development. Together with TTLL8, glycylates sperm flagella which regulates axonemal dynein motor activity, thereby controlling flagellar beat, directional sperm swimming and male fertility. The protein is Tubulin monoglycylase TTLL3 of Homo sapiens (Human).